The chain runs to 131 residues: Ribosome-binding factor A (131 aa).

It belongs to the RbfA family. Monomer. Binds 30S ribosomal subunits, but not 50S ribosomal subunits or 70S ribosomes.

Its subcellular location is the cytoplasm. One of several proteins that assist in the late maturation steps of the functional core of the 30S ribosomal subunit. Associates with free 30S ribosomal subunits (but not with 30S subunits that are part of 70S ribosomes or polysomes). Required for efficient processing of 16S rRNA. May interact with the 5'-terminal helix region of 16S rRNA. In Ruegeria pomeroyi (strain ATCC 700808 / DSM 15171 / DSS-3) (Silicibacter pomeroyi), this protein is Ribosome-binding factor A.